Consider the following 208-residue polypeptide: Redox-sensing transcriptional repressor Rex 1 (208 aa).

Positions 15 to 54 form a DNA-binding region, H-T-H motif; that stretch reads SYYMCLERLLDEGVEVVSSEELARRLDLKASQIRKDLSYF. Position 89–94 (89–94) interacts with NAD(+); it reads GAGNIG.

Belongs to the transcriptional regulatory Rex family. In terms of assembly, homodimer.

It is found in the cytoplasm. Modulates transcription in response to changes in cellular NADH/NAD(+) redox state. The polypeptide is Redox-sensing transcriptional repressor Rex 1 (Thermotoga maritima (strain ATCC 43589 / DSM 3109 / JCM 10099 / NBRC 100826 / MSB8)).